Consider the following 426-residue polypeptide: Enolase (426 aa).

Residues 38 to 60 (PSGASTGAHEAVEKRDGDKSRYG) are disordered. Residues 47 to 58 (EAVEKRDGDKSR) show a composition bias toward basic and acidic residues. Residue glutamine 163 coordinates (2R)-2-phosphoglycerate. Residue glutamate 205 is the Proton donor of the active site. Mg(2+) contacts are provided by aspartate 242, glutamate 285, and aspartate 312. Residues lysine 337, arginine 366, serine 367, and lysine 388 each contribute to the (2R)-2-phosphoglycerate site. The Proton acceptor role is filled by lysine 337.

This sequence belongs to the enolase family. Mg(2+) serves as cofactor.

The protein localises to the cytoplasm. It localises to the secreted. The protein resides in the cell surface. The enzyme catalyses (2R)-2-phosphoglycerate = phosphoenolpyruvate + H2O. The protein operates within carbohydrate degradation; glycolysis; pyruvate from D-glyceraldehyde 3-phosphate: step 4/5. Its function is as follows. Catalyzes the reversible conversion of 2-phosphoglycerate (2-PG) into phosphoenolpyruvate (PEP). It is essential for the degradation of carbohydrates via glycolysis. In Caulobacter sp. (strain K31), this protein is Enolase.